The chain runs to 354 residues: Neuronal growth regulator 1 (354 aa).

A signal peptide spans 1 to 37 (MDMMLLVQGACCSNQWLAAVLLSLCCLLPSCLPAGQS). 3 Ig-like C2-type domains span residues 38–134 (VDFP…VHLT), 139–221 (PKIY…KVVV), and 225–313 (PTIQ…LPLN). Residues C60 and C118 are joined by a disulfide bond. N-linked (GlcNAc...) asparagine glycans are attached at residues N73 and N155. Disulfide bonds link C160-C203 and C245-C297. The residue at position 187 (Y187) is a Phosphotyrosine. N-linked (GlcNAc...) asparagine glycans are attached at residues N275, N286, N294, and N307. G324 is lipidated: GPI-anchor amidated glycine. Positions 325–354 (SADVLFSCWYLVLTLSSFTSIFYLKNAILQ) are cleaved as a propeptide — removed in mature form.

This sequence belongs to the immunoglobulin superfamily. IgLON family.

Its subcellular location is the cell membrane. Functionally, may be involved in cell-adhesion. May function as a trans-neural growth-promoting factor in regenerative axon sprouting in the mammalian brain. This Homo sapiens (Human) protein is Neuronal growth regulator 1 (NEGR1).